A 127-amino-acid polypeptide reads, in one-letter code: Small ribosomal subunit protein uS12 (127 aa).

The residue at position 89 (D89) is a 3-methylthioaspartic acid.

It belongs to the universal ribosomal protein uS12 family. As to quaternary structure, part of the 30S ribosomal subunit. Contacts proteins S8 and S17. May interact with IF1 in the 30S initiation complex.

In terms of biological role, with S4 and S5 plays an important role in translational accuracy. Interacts with and stabilizes bases of the 16S rRNA that are involved in tRNA selection in the A site and with the mRNA backbone. Located at the interface of the 30S and 50S subunits, it traverses the body of the 30S subunit contacting proteins on the other side and probably holding the rRNA structure together. The combined cluster of proteins S8, S12 and S17 appears to hold together the shoulder and platform of the 30S subunit. The polypeptide is Small ribosomal subunit protein uS12 (Campylobacter lari (strain RM2100 / D67 / ATCC BAA-1060)).